The sequence spans 85 residues: MSGQVPEYQFWLLAEISPVHSEKVINALRDYLVMGYNRMEACGRHGVSPGYFSGALKRFQRVSQTVYRLVPFYFPEAGHEVHRGE.

Regulates the transcription of genes involved in the biosynthesis of F1845 fimbrial adhesin. The protein is F1845 adhesin operon regulatory protein (daaA) of Escherichia coli.